The primary structure comprises 319 residues: GATA transcription factor 18 (319 aa).

The span at 1–15 shows a compositional bias: low complexity; that stretch reads MPDAAAAAAAAQDAD. A disordered region spans residues 1–74; sequence MPDAAAAAAA…AAPEPVSALL (74 aa). Acidic residues predominate over residues 31 to 60; it reads DNDDDDGDDGTEEDEEEDDDEEGDEEELPP. The 36-residue stretch at 74 to 109 folds into the Tify domain; that stretch reads LPGSPNQLTLLFQGEVYVFESVTPEKVQAVLLLLGR. The CCT domain occupies 143–185; the sequence is RVASLIRFREKRKERNFDKKIRYAVRKEVALRMQRRKGQFAGR. The segment at 215–242 adopts a GATA-type zinc-finger fold; that stretch reads CQNCGTSEKMTPAMRRGPAGPRTLCNAC. The disordered stretch occupies residues 292–319; that stretch reads ITASHGEVMGDSTPANEAEIGAPKAQSQ.

It belongs to the type IV zinc-finger family. Class C subfamily.

Its subcellular location is the nucleus. In terms of biological role, transcriptional activator that specifically binds 5'-GATA-3' or 5'-GAT-3' motifs within gene promoters. This is GATA transcription factor 18 from Oryza sativa subsp. japonica (Rice).